Reading from the N-terminus, the 229-residue chain is Platelet-activating factor acetylhydrolase IB subunit alpha2 (229 aa).

N-acetylserine is present on Ser2. Ser2 is subject to Phosphoserine. Ser48 is an active-site residue. Residue Ser64 is modified to Phosphoserine. Catalysis depends on residues Asp193 and His196. Thr220 bears the Phosphothreonine mark.

This sequence belongs to the 'GDSL' lipolytic enzyme family. Platelet-activating factor acetylhydrolase IB beta/gamma subunits subfamily. Forms a catalytic dimer which is either homodimer (alpha2/alpha2 homodimer) or heterodimer with PAFAH1B3 (alpha2/alpha1 heterodimer). Component of the cytosolic (PAF-AH (I)) heterotetrameric enzyme, which is composed of PAFAH1B1 (beta), PAFAH1B2 (alpha2) and PAFAH1B3 (alpha1) subunits. The catalytic activity of the enzyme resides in the alpha1 (PAFAH1B3) and alpha2 (PAFAH1B2) subunits, whereas the beta subunit (PAFAH1B1) has regulatory activity. Trimer formation is not essential for the catalytic activity. Interacts (homodimer form) with PAFAH1B1 (homodimer form); PAFAH1B2 competes with NDEL1 for PAFAH1B1 binding. Interacts with VLDLR; this interaction may modulate the Reelin pathway.

It localises to the cytoplasm. It catalyses the reaction a 1-O-alkyl-2-acetyl-sn-glycero-3-phosphocholine + H2O = a 1-O-alkyl-sn-glycero-3-phosphocholine + acetate + H(+). The enzyme catalyses 1-O-hexadecyl-2-acetyl-sn-glycero-3-phosphocholine + H2O = 1-O-hexadecyl-sn-glycero-3-phosphocholine + acetate + H(+). The catalysed reaction is 1-O-hexadecyl-2-acetyl-sn-glycero-3-phosphate + H2O = 1-O-hexadecyl-sn-glycero-3-phosphate + acetate + H(+). It carries out the reaction 1-O-hexadecyl-2-acetyl-sn-glycero-3-phosphoethanolamine + H2O = 1-O-hexadecyl-sn-glycero-3-phosphoethanolamine + acetate + H(+). With respect to regulation, beta subunit (PAFAH1B1) stimulates the acetylhydrolase activity of the alpha2/alpha2 catalytic homodimer. Alpha2 catalytic subunit of the cytosolic type I platelet-activating factor (PAF) acetylhydrolase (PAF-AH (I)) heterotetrameric enzyme that catalyzes the hydrolyze of the acetyl group at the sn-2 position of PAF and its analogs and modulates the action of PAF. The activity and substrate specificity of PAF-AH (I) are affected by its subunit composition. The alpha2/alpha2 homodimer (PAFAH1B2/PAFAH1B2 homodimer) hydrolyzes PAF and 1-O-alkyl-2-acetyl-sn-glycero-3-phosphorylethanolamine (AAGPE) more efficiently than 1-O-alkyl-2-acetyl-sn-glycero-3-phosphoric acid (AAGPA). In contrast, the alpha1/alpha2 heterodimer(PAFAH1B3/PAFAH1B3 heterodimer) hydrolyzes AAGPA more efficiently than PAF, but has little hydrolytic activity towards AAGPE. May play a role in male germ cell meiosis during the late pachytenestage and meiotic divisions as well as early spermiogenesis. In Pongo abelii (Sumatran orangutan), this protein is Platelet-activating factor acetylhydrolase IB subunit alpha2.